A 393-amino-acid polypeptide reads, in one-letter code: UDP-N-acetylglucosamine--N-acetylmuramyl-(pentapeptide) pyrophosphoryl-undecaprenol N-acetylglucosamine transferase (393 aa).

Residues 14-16 (TAG), Asn-128, Arg-170, Ser-210, and Gln-321 contribute to the UDP-N-acetyl-alpha-D-glucosamine site.

This sequence belongs to the glycosyltransferase 28 family. MurG subfamily.

The protein localises to the cell membrane. It carries out the reaction di-trans,octa-cis-undecaprenyl diphospho-N-acetyl-alpha-D-muramoyl-L-alanyl-D-glutamyl-meso-2,6-diaminopimeloyl-D-alanyl-D-alanine + UDP-N-acetyl-alpha-D-glucosamine = di-trans,octa-cis-undecaprenyl diphospho-[N-acetyl-alpha-D-glucosaminyl-(1-&gt;4)]-N-acetyl-alpha-D-muramoyl-L-alanyl-D-glutamyl-meso-2,6-diaminopimeloyl-D-alanyl-D-alanine + UDP + H(+). The protein operates within cell wall biogenesis; peptidoglycan biosynthesis. In terms of biological role, cell wall formation. Catalyzes the transfer of a GlcNAc subunit on undecaprenyl-pyrophosphoryl-MurNAc-pentapeptide (lipid intermediate I) to form undecaprenyl-pyrophosphoryl-MurNAc-(pentapeptide)GlcNAc (lipid intermediate II). The polypeptide is UDP-N-acetylglucosamine--N-acetylmuramyl-(pentapeptide) pyrophosphoryl-undecaprenol N-acetylglucosamine transferase (Bifidobacterium adolescentis (strain ATCC 15703 / DSM 20083 / NCTC 11814 / E194a)).